A 60-amino-acid chain; its full sequence is Ferredoxin (60 aa).

4Fe-4S ferredoxin-type domains are found at residues 2-29 and 30-60; these read KVRV…LGDD and GKAK…SVEE. The [4Fe-4S] cluster site is built by Cys-10, Cys-13, and Cys-16. An intrachain disulfide couples Cys-20 to Cys-43. Cys-51 serves as a coordination point for [4Fe-4S] cluster.

In terms of assembly, monomer. [4Fe-4S] cluster is required as a cofactor.

Ferredoxins are iron-sulfur proteins that transfer electrons in a wide variety of metabolic reactions. The polypeptide is Ferredoxin (fdx) (Thermotoga maritima (strain ATCC 43589 / DSM 3109 / JCM 10099 / NBRC 100826 / MSB8)).